The primary structure comprises 82 residues: Cytotoxin 6 (82 aa).

A signal peptide spans 1-21; it reads MKTLLLTLVVVTIVCLDLGYT. 4 cysteine pairs are disulfide-bonded: C24–C42, C35–C59, C63–C74, and C75–C80.

The protein belongs to the three-finger toxin family. Short-chain subfamily. Type IA cytotoxin sub-subfamily. In terms of assembly, monomer in solution; Homodimer and oligomer in the presence of negatively charged lipids forming a pore with a size ranging between 20 and 30 Angstroms. As to expression, expressed by the venom gland.

The protein localises to the secreted. The protein resides in the target cell membrane. Functionally, shows cytolytic activity on many different cells by forming pore in lipid membranes. In vivo, increases heart rate or kills the animal by cardiac arrest. In addition, it binds to heparin with high affinity, interacts with Kv channel-interacting protein 1 (KCNIP1) in a calcium-independent manner, and binds to integrin alpha-V/beta-3 (ITGAV/ITGB3) with moderate affinity. This Naja atra (Chinese cobra) protein is Cytotoxin 6.